Here is a 355-residue protein sequence, read N- to C-terminus: Protein pelota homolog (355 aa).

The protein belongs to the eukaryotic release factor 1 family. Pelota subfamily. Monomer. A divalent metal cation is required as a cofactor.

It localises to the cytoplasm. In terms of biological role, may function in recognizing stalled ribosomes, interact with stem-loop structures in stalled mRNA molecules, and effect endonucleolytic cleavage of the mRNA. May play a role in the release non-functional ribosomes and degradation of damaged mRNAs. Has endoribonuclease activity. In Haloarcula marismortui (strain ATCC 43049 / DSM 3752 / JCM 8966 / VKM B-1809) (Halobacterium marismortui), this protein is Protein pelota homolog.